A 394-amino-acid polypeptide reads, in one-letter code: Probable peptidoglycan glycosyltransferase FtsW (394 aa).

The Cytoplasmic segment spans residues 1-27 (MEFLQNIKKNYDEWTRITPQGLLYDRA). The chain crosses the membrane as a helical span at residues 28 to 48 (LFWLFVILLLIGLVAVTSASI). Over 49–66 (PYSSRLFNDPFYFAKRDA) the chain is Periplasmic. Residues 67 to 87 (IYVLLSLLTCYISLQISSSQW) traverse the membrane as a helical segment. The Cytoplasmic segment spans residues 88 to 93 (EKWHAK). A helical membrane pass occupies residues 94–114 (IFLFSVILLLLVPFIGTSVNG). Topologically, residues 115-120 (AKRWIS) are periplasmic. Residues 121-141 (LGILNFQPAEFAKLALTCFLA) traverse the membrane as a helical segment. Residues 142-155 (SYFTRRYDEVRSRH) are Cytoplasmic-facing. 2 consecutive transmembrane segments (helical) span residues 156–176 (VSIF…LLQP) and 177–197 (DLGS…IVGA). Residue Lys198 is a topological domain, cytoplasmic. The helical transmembrane segment at 199-219 (ILQFVGLIALGGILFVWLVLT) threads the bilayer. Residues 220 to 277 (ASYRLKRFIGFLEPFKEPYGTGFQLTNSLIAFGRGEITGEGLGNSIQKLDYLPEAHTD) lie on the Periplasmic side of the membrane. A helical transmembrane segment spans residues 278 to 298 (FIMAIIGEEFGFIGILIVILL). The Cytoplasmic portion of the chain corresponds to 299–322 (LGLLIFRAMKIGRESLMLEQRFRG). Residues 323–343 (FFALGIGFWIFFQGFVNLGMA) traverse the membrane as a helical segment. Residues 344–353 (LGMLPTKGLT) lie on the Periplasmic side of the membrane. The chain crosses the membrane as a helical span at residues 354–374 (FPLVSYGGSSIIIMSATIGIL). Over 375–394 (LRIDHENRLFRIGQARLRDD) the chain is Cytoplasmic.

The protein belongs to the SEDS family. FtsW subfamily.

Its subcellular location is the cell inner membrane. It carries out the reaction [GlcNAc-(1-&gt;4)-Mur2Ac(oyl-L-Ala-gamma-D-Glu-L-Lys-D-Ala-D-Ala)](n)-di-trans,octa-cis-undecaprenyl diphosphate + beta-D-GlcNAc-(1-&gt;4)-Mur2Ac(oyl-L-Ala-gamma-D-Glu-L-Lys-D-Ala-D-Ala)-di-trans,octa-cis-undecaprenyl diphosphate = [GlcNAc-(1-&gt;4)-Mur2Ac(oyl-L-Ala-gamma-D-Glu-L-Lys-D-Ala-D-Ala)](n+1)-di-trans,octa-cis-undecaprenyl diphosphate + di-trans,octa-cis-undecaprenyl diphosphate + H(+). It participates in cell wall biogenesis; peptidoglycan biosynthesis. In terms of biological role, peptidoglycan polymerase that is essential for cell division. This is Probable peptidoglycan glycosyltransferase FtsW from Haemophilus influenzae (strain ATCC 51907 / DSM 11121 / KW20 / Rd).